The chain runs to 370 residues: Chaperone protein DnaJ (370 aa).

The J domain occupies 7–73; it reads DYYEILGVPR…QKRAMYDRFG (67 aa). The CR-type zinc finger occupies 144-226; that stretch reads GTEIPIEYER…CGGSGRVLRR (83 aa). Positions 157, 160, 174, 177, 200, 203, 214, and 217 each coordinate Zn(2+). 4 CXXCXGXG motif repeats span residues 157–164, 174–181, 200–207, and 214–221; these read CPRCGGTG, CDECGGTG, and CHECGGSG.

This sequence belongs to the DnaJ family. As to quaternary structure, homodimer. Requires Zn(2+) as cofactor.

Its subcellular location is the cytoplasm. Functionally, participates actively in the response to hyperosmotic and heat shock by preventing the aggregation of stress-denatured proteins and by disaggregating proteins, also in an autonomous, DnaK-independent fashion. Unfolded proteins bind initially to DnaJ; upon interaction with the DnaJ-bound protein, DnaK hydrolyzes its bound ATP, resulting in the formation of a stable complex. GrpE releases ADP from DnaK; ATP binding to DnaK triggers the release of the substrate protein, thus completing the reaction cycle. Several rounds of ATP-dependent interactions between DnaJ, DnaK and GrpE are required for fully efficient folding. Also involved, together with DnaK and GrpE, in the DNA replication of plasmids through activation of initiation proteins. In Thermotoga neapolitana (strain ATCC 49049 / DSM 4359 / NBRC 107923 / NS-E), this protein is Chaperone protein DnaJ.